We begin with the raw amino-acid sequence, 243 residues long: Small ribosomal subunit protein uS3 (243 aa).

Residues 39-110 (IRTFIQKKYG…QVRINVVEVE (72 aa)) enclose the KH type-2 domain. The disordered stretch occupies residues 216 to 243 (KTIPVGASPKRKAGRRPQQFEDRSNENS). Positions 233–243 (QQFEDRSNENS) are enriched in basic and acidic residues.

This sequence belongs to the universal ribosomal protein uS3 family. As to quaternary structure, part of the 30S ribosomal subunit. Forms a tight complex with proteins S10 and S14.

Binds the lower part of the 30S subunit head. Binds mRNA in the 70S ribosome, positioning it for translation. The protein is Small ribosomal subunit protein uS3 of Prochlorococcus marinus (strain MIT 9312).